Here is a 466-residue protein sequence, read N- to C-terminus: MRNSWVASRKGKTNVSQMHFARKGEITEEMRYVAKRENLPESLVMEEVARGRMIIPANINHINLEPMAIGIASTCKVNANIGASPNASDISEELKKLDLAVKYGADTLMDLSTGGVNLDEVRTEIINASPIPIGTVPVYQALESVHGSISRLNEDDFLHIIEKHCQQGVDYQTIHAGLLIEHLPKVKGRITGIVSRGGGILAQWMLYHYKQNPLFTRFDDICEIFKRYDCTFSLGDSLRPGCLHDASDEAQLAELKTLGELTRRAWKHDVQVMVEGPGHVPMDQIEFNVRKQMEECSEAPFYVLGPLVTDISPGYDHISSAIGAAMAGWYGTAMLCYVTPKEHLGLPNPEDVREGLIAYKIAAHAADVARHRSGARDRDDELSKARKEFDWNKQFELSLDPEKAKQYHDETLPEEIFKKAEFCSMCGPNHCPMNTKITDEDLDQLNDQIQSKGAAELTPVKLNKEN.

Substrate contacts are provided by residues asparagine 80, methionine 109, tyrosine 139, histidine 175, 195–197 (SRG), 236–239 (DSLR), and glutamate 275. Zn(2+) is bound at residue histidine 279. Tyrosine 302 is a binding site for substrate. Histidine 343 lines the Zn(2+) pocket. Cysteine 423, cysteine 426, and cysteine 431 together coordinate [4Fe-4S] cluster.

Belongs to the ThiC family. Requires [4Fe-4S] cluster as cofactor.

The enzyme catalyses 5-amino-1-(5-phospho-beta-D-ribosyl)imidazole + S-adenosyl-L-methionine = 4-amino-2-methyl-5-(phosphooxymethyl)pyrimidine + CO + 5'-deoxyadenosine + formate + L-methionine + 3 H(+). Its pathway is cofactor biosynthesis; thiamine diphosphate biosynthesis. In terms of biological role, catalyzes the synthesis of the hydroxymethylpyrimidine phosphate (HMP-P) moiety of thiamine from aminoimidazole ribotide (AIR) in a radical S-adenosyl-L-methionine (SAM)-dependent reaction. In Prochlorococcus marinus (strain NATL1A), this protein is Phosphomethylpyrimidine synthase.